Here is a 742-residue protein sequence, read N- to C-terminus: MTFAASFRALLCVLFCAALVHCKTRTKRYVPHSELWRILAVVDELQREQAAEQRQEDALALALRSDIAGGGGGGQLADNVRWFPETYDYGALADRDVDKRVFDSLGGYEVHGFKKRGSLDAIPQDTDASSDKRALDSLGGFQVHGWKRALDTLGGFQVHGWKRGSGAEKRQVDRLGGFQVHGWKKRALDSLGGFQVHGWKKRGTGGQMHASSPRVVPWGSRSLLADTQSGHRWKRDTELVENRQTTGQQTEVNKRALDSLGGFQVHGWKRSGEAGKRQVDSLGGFQVHGWKRADDQGKRALDSLGGFQVHGWKRFDNSAGEKRALDSLGGFQVHGWKRAGDKKSLDSLGSFQVHGWKRFDNDISGQKRSLDSLGSFQVHGWKRSDQDNKRALDSLGGFQVHGWKRADDDGKRSLDSLGSFQVHGWKRADEDDKKSLDSLGSFQVHGWKRGDEDDKRSLDSLGSFQVHGWKRADEDDKRSLDSLGSFQVHGWKRSDEDDKRSLDSLGSFQVHGWKRSDEDDKRSLDSLGSFQVHGWKRADEDDKRSLDSLGSFQVHGWKRNSPGLKRALDSLGGFQVHGWKRNNEYYSGAENEKRALDSLGGFQVHGWKRDQPGEKRSLDSLGSFQVHGWKRNLNNLGSFQVHGWKKNSADEMGDKPGVESYQDNSGKILSGKAQEFEGGDETGDIHGVVRTLSGVDASGKERENIKELDAKFKTNDGGVGVEHIFVDNVKSADDDVPSAGQM.

An N-terminal signal peptide occupies residues 1–22 (MTFAASFRALLCVLFCAALVHC). Residues 23–98 (KTRTKRYVPH…YGALADRDVD (76 aa)) constitute a propeptide that is removed on maturation. Positions 117 to 131 (GSLDAIPQDTDASSD) are cleaved as a propeptide — connecting peptide. Propeptides lie at residues 164-168 (GSGAE), 202-220 (RGTGGQMHASSPRVVPWGS), 236-253 (DTELVENRQTTGQQTEVN), 271-275 (SGEAG), 293-297 (ADDQG), 315-321 (FDNSAGE), 339-341 (AGD), 359-366 (FDNDISGQ), 384-388 (SDQDN), 406-410 (ADDDG), 428-432 (ADEDD), 450-454 (GDEDD), 472-476 (ADEDD), 494-498 (SDEDD), 516-520 (SDEDD), 538-542 (ADEDD), 560-564 (NSPGL), 582-592 (NNEYYSGAENE), 610-614 (DQPGE), and 647-742 (NSAD…AGQM).

Expressed in pleural, pedal, abdominal, buccal and cerebral ganglia.

It is found in the secreted. Initiates organized rhythmic motor output of feeding circuit. This chain is Feeding circuit activating peptides, found in Aplysia californica (California sea hare).